Reading from the N-terminus, the 372-residue chain is Non-structural protein NS2 (372 aa).

A disordered region spans residues 259–326 (NQIEKQHTTH…QESEPESPSF (68 aa)). A compositionally biased stretch (low complexity) spans 299–309 (TETTSTSSSHH).

This Aedes albopictus (Asian tiger mosquito) protein is Non-structural protein NS2 (NS).